The primary structure comprises 134 residues: Ribonuclease VapC1 (134 aa).

The 130-residue stretch at 3–132 (YMLDTNIIIY…RITDLQWQDW (130 aa)) folds into the PINc domain. The Mg(2+) site is built by D6 and D99.

It belongs to the PINc/VapC protein family. It depends on Mg(2+) as a cofactor.

Toxic component of a type II toxin-antitoxin (TA) system. Acts as an RNase, its toxic effect is neutralized by VapB1 antitoxin. The protein is Ribonuclease VapC1 of Haemophilus influenzae (strain ATCC 51907 / DSM 11121 / KW20 / Rd).